The sequence spans 254 residues: Type II restriction enzyme HpaI (254 aa).

It carries out the reaction Endonucleolytic cleavage of DNA to give specific double-stranded fragments with terminal 5'-phosphates.. A P subtype restriction enzyme that recognizes the double-stranded sequence 5'-GTTAAC-3' and cleaves after T-3. This is Type II restriction enzyme HpaI (hpaIR) from Haemophilus parainfluenzae.